The following is a 546-amino-acid chain: Tyrosine-protein kinase yes (546 aa).

Over residues Met1 to Pro18 the composition is skewed to basic and acidic residues. The interval Met1–Gly58 is disordered. A lipid anchor (N-myristoyl glycine) is attached at Gly2. Cys3 is lipidated: S-palmitoyl cysteine; in membrane form. Over residues Pro48–Gly58 the composition is skewed to polar residues. Positions Gly94–Ser155 constitute an SH3 domain. An SH2 domain is found at Trp161–Cys258. Residues Leu280–Phe533 enclose the Protein kinase domain. Residues Leu286–Val294 and Lys308 each bind ATP. Asp399 serves as the catalytic Proton acceptor. Phosphotyrosine; by autocatalysis is present on Tyr429. Tyr540 bears the Phosphotyrosine; by CSK mark.

This sequence belongs to the protein kinase superfamily. Tyr protein kinase family. SRC subfamily. Post-translationally, autophosphorylation at Tyr-429 maintains enzyme activity. Palmitoylation at Cys-3 promotes membrane localization. Widely expressed.

The protein resides in the cell membrane. The protein localises to the cytoplasm. It localises to the cytoskeleton. It is found in the microtubule organizing center. Its subcellular location is the centrosome. The protein resides in the cytosol. The protein localises to the cell junction. The enzyme catalyses L-tyrosyl-[protein] + ATP = O-phospho-L-tyrosyl-[protein] + ADP + H(+). Functionally, non-receptor protein tyrosine kinase that is involved in the regulation of cell growth and survival, apoptosis, cell-cell adhesion, cytoskeleton remodeling, differentiation, G2/M progression and cytokinesis. Required for convergent extension cell movements during gastrulation, acting with fyna via rhoa. May be required for epiboly to occur, possibly through its effects in calcium signaling. During embryonic development, phosphorylates ptk2.1/fak. This Danio rerio (Zebrafish) protein is Tyrosine-protein kinase yes (yes1).